The following is a 104-amino-acid chain: Glutaredoxin 1 (104 aa).

Positions 1–96 (MNKSILHTII…KLLETQPKNK (96 aa)) constitute a Glutaredoxin domain. Cysteine 17 and cysteine 20 are joined by a disulfide.

The protein belongs to the glutaredoxin family. As to quaternary structure, monomer.

The protein resides in the cytoplasm. Its function is as follows. Has a glutathione-disulfide oxidoreductase activity in the presence of NADPH and glutathione reductase. Reduces low molecular weight disulfides and proteins. The protein is Glutaredoxin 1 (grxC1) of Rickettsia typhi (strain ATCC VR-144 / Wilmington).